The sequence spans 323 residues: Prostaglandin F synthase 2 (323 aa).

Residues 20-24 (GFGTY) and Asp-50 contribute to the NADP(+) site. Tyr-55 serves as the catalytic Proton donor. His-117 is a substrate binding site. NADP(+)-binding positions include 166 to 167 (SN), Gln-190, 216 to 221 (YAALGA), and 270 to 280 (KSFNKKRIKEN).

It belongs to the aldo/keto reductase family. Monomer.

The protein localises to the cytoplasm. It carries out the reaction prostaglandin F2alpha + NADP(+) = prostaglandin D2 + NADPH + H(+). The protein operates within lipid metabolism; prostaglandin biosynthesis. Functionally, catalyzes the reduction of PGD(2) and PGH(2) to PGF(2 alpha) and a stereoisomer, respectively. It has a broad substrate specificity and also reduces other carbonyl compounds. In Bos taurus (Bovine), this protein is Prostaglandin F synthase 2.